A 484-amino-acid chain; its full sequence is tRNA sulfurtransferase (484 aa).

Residues 63–167 form the THUMP domain; that stretch reads QAFGERLACI…RDNLYMVTKR (105 aa). ATP contacts are provided by residues 185 to 186, K267, G289, and Q298; that span reads LI. C346 and C458 are disulfide-bonded. Residues 406–484 enclose the Rhodanese domain; it reads IDTNQVVIDI…GYTNVKVYRP (79 aa). C458 (cysteine persulfide intermediate) is an active-site residue.

The protein belongs to the ThiI family.

Its subcellular location is the cytoplasm. The enzyme catalyses [ThiI sulfur-carrier protein]-S-sulfanyl-L-cysteine + a uridine in tRNA + 2 reduced [2Fe-2S]-[ferredoxin] + ATP + H(+) = [ThiI sulfur-carrier protein]-L-cysteine + a 4-thiouridine in tRNA + 2 oxidized [2Fe-2S]-[ferredoxin] + AMP + diphosphate. It carries out the reaction [ThiS sulfur-carrier protein]-C-terminal Gly-Gly-AMP + S-sulfanyl-L-cysteinyl-[cysteine desulfurase] + AH2 = [ThiS sulfur-carrier protein]-C-terminal-Gly-aminoethanethioate + L-cysteinyl-[cysteine desulfurase] + A + AMP + 2 H(+). Its pathway is cofactor biosynthesis; thiamine diphosphate biosynthesis. Catalyzes the ATP-dependent transfer of a sulfur to tRNA to produce 4-thiouridine in position 8 of tRNAs, which functions as a near-UV photosensor. Also catalyzes the transfer of sulfur to the sulfur carrier protein ThiS, forming ThiS-thiocarboxylate. This is a step in the synthesis of thiazole, in the thiamine biosynthesis pathway. The sulfur is donated as persulfide by IscS. In Shewanella baltica (strain OS155 / ATCC BAA-1091), this protein is tRNA sulfurtransferase.